Here is a 719-residue protein sequence, read N- to C-terminus: Catalase-3 (719 aa).

Residues 1-18 (MRVNALLPLSGLIGTALA) form the signal peptide. A propeptide spanning residues 19-30 (ACPFADPSALGR) is cleaved from the precursor. Catalysis depends on residues H102 and N175. Y389 contributes to the heme binding site.

The protein belongs to the catalase family. The cofactor is heme.

It carries out the reaction 2 H2O2 = O2 + 2 H2O. In terms of biological role, occurs in almost all aerobically respiring organisms and serves to protect cells from the toxic effects of hydrogen peroxide. This chain is Catalase-3 (cat-3), found in Neurospora crassa (strain ATCC 24698 / 74-OR23-1A / CBS 708.71 / DSM 1257 / FGSC 987).